Here is a 296-residue protein sequence, read N- to C-terminus: Putative peptide transport system permease protein BRA1093/BS1330_II1085 (296 aa).

Helical transmembrane passes span 35–55 (IGLVLLLIVVLAAVLAPWITN), 97–117 (LWIGLTVAVLSAILGAIIGIA), 131–151 (VMDALMAFPAILLAIGISAAL), 205–225 (ILPNCLAPLLVTLTFVFAYAI), 229–249 (ATLSFLGIGTPPPHASWGSIV), and 260–280 (WWIMLFPGIAITISALAINLI). One can recognise an ABC transmembrane type-1 domain in the interval 97-281 (LWIGLTVAVL…ISALAINLIG (185 aa)).

This sequence belongs to the binding-protein-dependent transport system permease family. The complex is composed of two ATP-binding proteins (BRA1094), two transmembrane proteins (BRA1092 and BRA1093) and a solute-binding protein (BRA1090).

It is found in the cell inner membrane. Its function is as follows. Probably part of an ABC transporter complex that could be involved in peptide import. Probably responsible for the translocation of the substrate across the membrane. The sequence is that of Putative peptide transport system permease protein BRA1093/BS1330_II1085 from Brucella suis biovar 1 (strain 1330).